Reading from the N-terminus, the 291-residue chain is Pantothenate synthetase (291 aa).

M30 to H37 contacts ATP. The active-site Proton donor is H37. Q61 is a binding site for (R)-pantoate. Residue Q61 participates in beta-alanine binding. G147–D150 provides a ligand contact to ATP. Q153 serves as a coordination point for (R)-pantoate. ATP-binding positions include V176 and L184–R187.

Belongs to the pantothenate synthetase family. In terms of assembly, homodimer.

It is found in the cytoplasm. It catalyses the reaction (R)-pantoate + beta-alanine + ATP = (R)-pantothenate + AMP + diphosphate + H(+). The protein operates within cofactor biosynthesis; (R)-pantothenate biosynthesis; (R)-pantothenate from (R)-pantoate and beta-alanine: step 1/1. Catalyzes the condensation of pantoate with beta-alanine in an ATP-dependent reaction via a pantoyl-adenylate intermediate. The sequence is that of Pantothenate synthetase from Koribacter versatilis (strain Ellin345).